A 306-amino-acid chain; its full sequence is uncharacterized protein (306 aa).

This is an uncharacterized protein from Haemophilus influenzae (strain ATCC 51907 / DSM 11121 / KW20 / Rd).